Consider the following 518-residue polypeptide: MIPDVSQALAWLEKHPQALQGIQRGLERETLRVNADGTLATTGHPLALGSALTHKWITTDFAEALLEFITPVDGDIEHMLTFMRDVHRYTARQLGDERMWPLSMPCYIAPGQDIELAQYGTSNVGRLKTLYREGLKNRYGALMQTISGVHYNFSLPMAFWQAKCGVEDVESGKEAISAGYFRSIRNYYRFGWVIPYLFGASPAICSSFLQGKPTTLPFEEAGNGMYYLPYATSLRLSDLGYTNKSQSNLGITFNDLHEYVAGLKRAIKTPSEEYAKIGLQKDGKYLQINSNILQIENELYAPIRPKRVTRRGETPSDALLRGGIEYIEVRSLDINPFSPIGVDAQQVRFLDLFMVWCALADAPEMSSDELLCTRTNWNRVILEGRKPGLTLGIGCESAQFPLAQVGKDLFRDLRRVAQTLDSIHGGQAYQQVCDELLACFDDPELTFSARILRSMIEEGIGGTGRALADRYRTQLREEPLEILSEADFIAEREASVARQKKVEAEDSEPFEALLARHA.

This sequence belongs to the glutamate--cysteine ligase type 1 family. Type 1 subfamily.

It catalyses the reaction L-cysteine + L-glutamate + ATP = gamma-L-glutamyl-L-cysteine + ADP + phosphate + H(+). Its pathway is sulfur metabolism; glutathione biosynthesis; glutathione from L-cysteine and L-glutamate: step 1/2. This Klebsiella pneumoniae (strain 342) protein is Glutamate--cysteine ligase.